Here is a 306-residue protein sequence, read N- to C-terminus: Formimidoylglutamase (306 aa).

Over residues 1–13 (MFQNATDWTPTST) the composition is skewed to polar residues. Residues 1-36 (MFQNATDWTPTSTDPRDEQFGGVVEPVPTPSDADDY) form a disordered region. Positions 123, 147, 149, 151, 234, and 236 each coordinate Mn(2+).

Belongs to the arginase family. Requires Mn(2+) as cofactor.

The catalysed reaction is N-formimidoyl-L-glutamate + H2O = formamide + L-glutamate. It participates in amino-acid degradation; L-histidine degradation into L-glutamate; L-glutamate from N-formimidoyl-L-glutamate (hydrolase route): step 1/1. Functionally, catalyzes the conversion of N-formimidoyl-L-glutamate to L-glutamate and formamide. This chain is Formimidoylglutamase, found in Halobacterium salinarum (strain ATCC 29341 / DSM 671 / R1).